The sequence spans 382 residues: MDGETAEEQGGPVPPPVAPGGPGLGGAPGGRREPKKYAVTDDYQLSKQVLGLGVNGKVLECFHRRTGQKCALKLLYDSPKARQEVDHHWQASGGPHIVCILDVYENMHHGKRCLLIIMECMEGGELFSRIQERGDQAFTEREAAEIMRDIGTAIQFLHSHNIAHRDVKPENLLYTSKEKDAVLKLTDFGFAKETTQNALQTPCYTPYYVAPEVLGPEKYDKSCDMWSLGVIMYILLCGFPPFYSNTGQAISPGMKRRIRLGQYGFPNPEWSEVSEDAKQLIRLLLKTDPTERLTITQFMNHPWINQSMVVPQTPLHTARVLQEDKDHWDEVKEEMTSALATMRVDYDQVKIKDLKTSNNRLLNKRRKKQAGSSSASQGCNNQ.

Met-1 is modified (N-acetylmethionine). The tract at residues 1 to 34 (MDGETAEEQGGPVPPPVAPGGPGLGGAPGGRREP) is disordered. The segment covering 20–29 (GGPGLGGAPG) has biased composition (gly residues). The region spanning 44-304 (QLSKQVLGLG…ITQFMNHPWI (261 aa)) is the Protein kinase domain. ATP contacts are provided by residues 50–58 (LGLGVNGKV) and Lys-73. The active-site Proton acceptor is Asp-166. The residue at position 201 (Thr-201) is a Phosphothreonine; by MAPK14. Ser-251 bears the Phosphoserine; by MAPK14 mark. Position 307 is a phosphoserine; by autocatalysis (Ser-307). Residues 307–343 (SMVVPQTPLHTARVLQEDKDHWDEVKEEMTSALATMR) are autoinhibitory helix. Thr-313 carries the phosphothreonine; by MAPK14 modification. Residues 335-344 (MTSALATMRV) carry the Nuclear export signal (NES) motif. The p38 MAPK-binding site stretch occupies residues 345–369 (DYDQVKIKDLKTSNNRLLNKRRKKQ). Short sequence motifs (bipartite nuclear localization signal) lie at residues 350-353 (KIKD) and 364-368 (KRRKK). The tract at residues 357 to 382 (SNNRLLNKRRKKQAGSSSASQGCNNQ) is disordered. Polar residues predominate over residues 370-382 (AGSSSASQGCNNQ).

This sequence belongs to the protein kinase superfamily. CAMK Ser/Thr protein kinase family. In terms of assembly, heterodimer with p38-alpha/MAPK14. The heterodimer with p38-alpha/MAPK14 forms a stable complex: molecules are positioned 'face to face' so that the ATP-binding sites of both kinases are at the heterodimer interface. Interacts with TCF3 and with polycomb proteins, such as PCH2 and BMI1/PCGF4. Post-translationally, phosphorylated and activated by MAPK1/ERK2 and MAPK3/ERK1. Phosphorylated and activated by MAP kinase p38-alpha/MAPK14 at Thr-201, Ser-251 and Thr-313. Widely expressed, with a higher expression level observed in heart and skeletal muscle. No expression in brain. Expressed in the retinal pigment epithelium.

It localises to the nucleus. It is found in the cytoplasm. The catalysed reaction is L-seryl-[protein] + ATP = O-phospho-L-seryl-[protein] + ADP + H(+). It catalyses the reaction L-threonyl-[protein] + ATP = O-phospho-L-threonyl-[protein] + ADP + H(+). Its activity is regulated as follows. Activated following phosphorylation by p38-alpha/MAPK14 following various stresses. Inhibited by ligand 5B (2'-[2-(1,3-benzodioxol-5-yl)pyrimidin-4-yl]-5',6'-dihydrospiro[piperidine-4,7'-pyrrolo[3,2-c]pyridin]- 4'(1'h)-one) and ligand P4O (2-[2-(2-fluorophenyl)pyridin-4-yl]-1,5,6,7-tetrahydro- 4h-pyrrolo[3,2-c]pyridin-4-one), 2 ATP-competitive inhibitors. Its function is as follows. Stress-activated serine/threonine-protein kinase involved in cytokines production, endocytosis, cell migration, chromatin remodeling and transcriptional regulation. Following stress, it is phosphorylated and activated by MAP kinase p38-alpha/MAPK14, leading to phosphorylation of substrates. Phosphorylates serine in the peptide sequence, Hyd-X-R-X(2)-S, where Hyd is a large hydrophobic residue. MAPKAPK2 and MAPKAPK3, share the same function and substrate specificity, but MAPKAPK3 kinase activity and level in protein expression are lower compared to MAPKAPK2. Phosphorylates HSP27/HSPB1, KRT18, KRT20, RCSD1, RPS6KA3, TAB3 and TTP/ZFP36. Mediates phosphorylation of HSP27/HSPB1 in response to stress, leading to dissociate HSP27/HSPB1 from large small heat-shock protein (sHsps) oligomers and impair their chaperone activities and ability to protect against oxidative stress effectively. Involved in inflammatory response by regulating tumor necrosis factor (TNF) and IL6 production post-transcriptionally: acts by phosphorylating AU-rich elements (AREs)-binding proteins, such as TTP/ZFP36, leading to regulate the stability and translation of TNF and IL6 mRNAs. Phosphorylation of TTP/ZFP36, a major post-transcriptional regulator of TNF, promotes its binding to 14-3-3 proteins and reduces its ARE mRNA affinity leading to inhibition of dependent degradation of ARE-containing transcript. Involved in toll-like receptor signaling pathway (TLR) in dendritic cells: required for acute TLR-induced macropinocytosis by phosphorylating and activating RPS6KA3. Also acts as a modulator of Polycomb-mediated repression. This is MAP kinase-activated protein kinase 3 (MAPKAPK3) from Homo sapiens (Human).